A 200-amino-acid chain; its full sequence is Probable GTP-binding protein EngB (200 aa).

The EngB-type G domain occupies 26–200; that stretch reads SIPEIAIAGR…IYEIAQCIKK (175 aa). Residues 34–41, 61–65, 80–83, 147–150, and 179–181 each bind GTP; these read GRSNVGKS, GCTKQ, DLPG, TKID, and TSS. The Mg(2+) site is built by S41 and T63.

It belongs to the TRAFAC class TrmE-Era-EngA-EngB-Septin-like GTPase superfamily. EngB GTPase family. Mg(2+) serves as cofactor.

In terms of biological role, necessary for normal cell division and for the maintenance of normal septation. In Ehrlichia chaffeensis (strain ATCC CRL-10679 / Arkansas), this protein is Probable GTP-binding protein EngB.